A 331-amino-acid polypeptide reads, in one-letter code: tRNA-cytidine(32) 2-sulfurtransferase (331 aa).

Residues 1–33 are disordered; the sequence is MNAPHMNDTAADAATLDDAAAPAGRPALTRREQ. Residues 8–23 are compositionally biased toward low complexity; sequence DTAADAATLDDAAAPA. The PP-loop motif signature appears at 71-76; that stretch reads SGGKDS. [4Fe-4S] cluster contacts are provided by Cys-146, Cys-149, and Cys-237.

Belongs to the TtcA family. In terms of assembly, homodimer. The cofactor is Mg(2+). It depends on [4Fe-4S] cluster as a cofactor.

It is found in the cytoplasm. It catalyses the reaction cytidine(32) in tRNA + S-sulfanyl-L-cysteinyl-[cysteine desulfurase] + AH2 + ATP = 2-thiocytidine(32) in tRNA + L-cysteinyl-[cysteine desulfurase] + A + AMP + diphosphate + H(+). It functions in the pathway tRNA modification. Its function is as follows. Catalyzes the ATP-dependent 2-thiolation of cytidine in position 32 of tRNA, to form 2-thiocytidine (s(2)C32). The sulfur atoms are provided by the cysteine/cysteine desulfurase (IscS) system. This Burkholderia cenocepacia (strain HI2424) protein is tRNA-cytidine(32) 2-sulfurtransferase.